A 369-amino-acid polypeptide reads, in one-letter code: MSDLEQLERQILEDIAAAVDEQGIEAVRVAALGKKGTVSEKLKTLGGMSPEERQMQGPAINGLKNRVTEALSERRTELRKAAVAARLEREKVDVTLPVRESAASRGRIHPISQVIDEITAIFADMGFSIAEGPDIETDYYNFTALNFPEGHPAREMHDTFFFNPDEKGERKLLRTHTSPVQVHTMEKFAAMRDKEGRDEPIRIVIPGKTYRMDSDATHSPMFHQVEGLVVDKSANVANMKWVLEEFCKAFFEVPSVKMRMRPSFFPFTEPSVEVDIQCDRSGPHVKFGEGNDWLEILGCGMVHPNVLRMSGYDPEVYQGFAWGMGIGRIAMLKYGMPDLRAFFDADVRWIEHYGFRPLDIPTLFGGLSA.

Glu269 is a binding site for Mg(2+).

It belongs to the class-II aminoacyl-tRNA synthetase family. Phe-tRNA synthetase alpha subunit type 1 subfamily. As to quaternary structure, tetramer of two alpha and two beta subunits. The cofactor is Mg(2+).

It localises to the cytoplasm. It catalyses the reaction tRNA(Phe) + L-phenylalanine + ATP = L-phenylalanyl-tRNA(Phe) + AMP + diphosphate + H(+). The chain is Phenylalanine--tRNA ligase alpha subunit from Brucella melitensis biotype 1 (strain ATCC 23456 / CCUG 17765 / NCTC 10094 / 16M).